The primary structure comprises 423 residues: MLRVRCLRGGSRGAEAVHYIGSRLGRTLTGWVQRTFQSTQAATASSRNSSAADDKATEPLPKDCPVSSYNEWDPLEEVIVGRAENACVPPFTIEVKANTNEKYWPFYQKHGGHYFPKDHLKKAVAEIEEMCNILKMEGVTVRRPDPIDWSLKYKTPDFESTGLYSAMPRDILIVVGNEIIEAPMAWRSRFFEYRAYRSIIKDYFHRGAKWTTAPKPTMADELYNQDYPIHSIEDRHKLAAQGKFVTTEFEPCFDAADFIRAGRDIFAQRSQVTNYLGIEWMRRHLAPDYRVHIISFKDPNPMHIDATFNIIGPGIVLSNPDRPCHQIDLFKKAGWTIITPPTPIIPDDHPLWMSSKWLSMNVLMLDEKRVMVDANEVPIQKMFEKLGITTIKVNIRNANSLGGGFHCWTCDVRRRGTLQSYLD.

The transit peptide at 1–48 (MLRVRCLRGGSRGAEAVHYIGSRLGRTLTGWVQRTFQSTQAATASSRN) directs the protein to the mitochondrion. A compositionally biased stretch (low complexity) spans 39 to 51 (TQAATASSRNSSA). The tract at residues 39–65 (TQAATASSRNSSAADDKATEPLPKDCP) is disordered. Ser46 and Ser49 each carry phosphoserine. The span at 52–61 (ADDKATEPLP) shows a compositional bias: basic and acidic residues. Asp170 lines the arginine pocket. Catalysis depends on residues Asp254 and His303. Residues Asp305, Arg322, Ser354, and Ser355 each contribute to the arginine site. Residue Lys385 is modified to N6-acetyllysine. Residue Cys407 is the Amidino-cysteine intermediate of the active site.

The protein belongs to the amidinotransferase family. In terms of assembly, homodimer.

The protein localises to the mitochondrion inner membrane. The catalysed reaction is L-arginine + glycine = guanidinoacetate + L-ornithine. The enzyme catalyses 4-aminobutanoate + L-arginine = 4-guanidinobutanoate + L-ornithine. It catalyses the reaction beta-alanine + L-arginine = 3-guanidinopropanoate + L-ornithine. It carries out the reaction taurine + L-arginine = taurocyamine + L-ornithine. It functions in the pathway amine and polyamine biosynthesis; creatine biosynthesis; creatine from L-arginine and glycine: step 1/2. Transamidinase that catalyzes the transfer of the amidino group of L-arginine onto the amino moiety of acceptor metabolites such as glycine, beta-alanine, gamma-aminobutyric acid (GABA) and taurine yielding the corresponding guanidine derivatives. Catalyzes the rate-limiting step of creatine biosynthesis, namely the transfer of the amidino group from L-arginine to glycine to generate guanidinoacetate, which is then methylated by GAMT to form creatine. Provides creatine as a source for ATP generation in tissues with high energy demands, in particular skeletal muscle, heart and brain. The polypeptide is Glycine amidinotransferase, mitochondrial (GATM) (Pongo abelii (Sumatran orangutan)).